Here is a 366-residue protein sequence, read N- to C-terminus: Alanine racemase (366 aa).

Lysine 40 serves as the catalytic Proton acceptor; specific for D-alanine. Lysine 40 bears the N6-(pyridoxal phosphate)lysine mark. Arginine 136 lines the substrate pocket. The active-site Proton acceptor; specific for L-alanine is tyrosine 263. Methionine 310 lines the substrate pocket.

Belongs to the alanine racemase family. It depends on pyridoxal 5'-phosphate as a cofactor.

The enzyme catalyses L-alanine = D-alanine. Its pathway is amino-acid biosynthesis; D-alanine biosynthesis; D-alanine from L-alanine: step 1/1. Catalyzes the interconversion of L-alanine and D-alanine. May also act on other amino acids. The protein is Alanine racemase (alr) of Streptococcus pyogenes serotype M12 (strain MGAS2096).